Consider the following 1300-residue polypeptide: Insulin receptor-related protein (1300 aa).

The first 26 residues, 1 to 26 (MAVPALWPWGVHLLMSLLSLGSGLDT), serve as a signal peptide directing secretion. Asn-47 and Asn-100 each carry an N-linked (GlcNAc...) asparagine glycan. Intrachain disulfides connect Cys-214-Cys-222, Cys-216-Cys-228, Cys-229-Cys-237, Cys-233-Cys-246, Cys-249-Cys-258, Cys-262-Cys-274, Cys-280-Cys-300, Cys-304-Cys-317, and Cys-320-Cys-324. N-linked (GlcNAc...) asparagine glycosylation occurs at Asn-311. N-linked (GlcNAc...) asparagine glycans are attached at residues Asn-411, Asn-492, Asn-528, Asn-616, Asn-634, Asn-756, Asn-885, and Asn-898. 2 Fibronectin type-III domains span residues 483–603 (QTRT…TLPA) and 607–707 (VPQD…AQEV). Residues Cys-657 and Cys-864 are joined by a disulfide bond. At 747-921 (EAGLLRLGKN…LEEEDTGGMR (175 aa)) the chain is on the extracellular side. Residues 818-913 (IPGKVAWKAA…GVTFYITDLE (96 aa)) enclose the Fibronectin type-III 3 domain. A helical membrane pass occupies residues 922–943 (IFLTVTPVGFMLLVTLAALGFF). Residues 944 to 1300 (YSRKRNSTLY…YSAPNGGPGH (357 aa)) lie on the Cytoplasmic side of the membrane. Positions 979–1254 (IAIIRELGQG…RIQDELRPSF (276 aa)) constitute a Protein kinase domain. Residues 985 to 993 (LGQGSFGMV) and Lys-1013 each bind ATP. The Proton acceptor role is filled by Asp-1115. A phosphotyrosine; by autocatalysis mark is found at Tyr-1145 and Tyr-1146. Residues 1273 to 1300 (LPTEAEPDSPPTLNGASDYSAPNGGPGH) are disordered.

It belongs to the protein kinase superfamily. Tyr protein kinase family. Insulin receptor subfamily. Probable tetramer of 2 alpha and 2 beta chains linked by disulfide bonds. The alpha chains contribute to the formation of the ligand-binding domain, while the beta chains carry the kinase domain. In terms of processing, autophosphorylated on tyrosine residues between pH 7.9 and pH 10.5. In terms of tissue distribution, highly expressed in the islets as well as in pancreatic beta-cells.

The protein resides in the membrane. The catalysed reaction is L-tyrosyl-[protein] + ATP = O-phospho-L-tyrosyl-[protein] + ADP + H(+). In terms of biological role, receptor with tyrosine-protein kinase activity. Functions as a pH sensing receptor which is activated by increased extracellular pH. Activates an intracellular signaling pathway that involves IRS1 and AKT1/PKB. This is Insulin receptor-related protein (Insrr) from Mus musculus (Mouse).